Here is a 73-residue protein sequence, read N- to C-terminus: Cytoplasmic envelopment protein 3 (73 aa).

Gly2 is lipidated: N-myristoyl glycine; by host.

Belongs to the herpesviridae cytoplasmic envelopment protein 3 family. In terms of assembly, interacts with cytoplasmic envelopment protein 2; this interaction is essential for the proper localization of each protein to the assembly complex and thus for the production of infectious virus. Post-translationally, myristoylation and palmitoylation (probably on one or more of the nearby cysteines at the N-terminus) enable membrane-binding and Golgi apparatus-specific targeting and are essential for efficient packaging. Phosphorylated. Phosphorylation does not seem to be required for recycling to the host Golgi apparatus. Packaging is selective for underphosphorylated forms.

It is found in the virion tegument. It localises to the virion membrane. The protein resides in the host cell membrane. Its subcellular location is the host Golgi apparatus membrane. Its function is as follows. Plays an important role in the cytoplasmic envelopment of tegument proteins and capsids during the assembly and egress processes. Also participates in viral entry at the fusion step probably by regulating the core fusion machinery. The sequence is that of Cytoplasmic envelopment protein 3 (U71) from Homo sapiens (Human).